Here is a 368-residue protein sequence, read N- to C-terminus: 3-dehydroquinate synthase (368 aa).

Residues 71–76 (DGEAFK), 105–109 (GVVGD), 129–130 (TT), lysine 142, lysine 151, and 169–172 (TLRT) contribute to the NAD(+) site. Residues glutamate 184, histidine 247, and histidine 264 each contribute to the Zn(2+) site.

It belongs to the sugar phosphate cyclases superfamily. Dehydroquinate synthase family. Requires Co(2+) as cofactor. Zn(2+) serves as cofactor. NAD(+) is required as a cofactor.

The protein resides in the cytoplasm. The enzyme catalyses 7-phospho-2-dehydro-3-deoxy-D-arabino-heptonate = 3-dehydroquinate + phosphate. Its pathway is metabolic intermediate biosynthesis; chorismate biosynthesis; chorismate from D-erythrose 4-phosphate and phosphoenolpyruvate: step 2/7. Its function is as follows. Catalyzes the conversion of 3-deoxy-D-arabino-heptulosonate 7-phosphate (DAHP) to dehydroquinate (DHQ). The polypeptide is 3-dehydroquinate synthase (Cupriavidus taiwanensis (strain DSM 17343 / BCRC 17206 / CCUG 44338 / CIP 107171 / LMG 19424 / R1) (Ralstonia taiwanensis (strain LMG 19424))).